Reading from the N-terminus, the 565-residue chain is Proline--tRNA ligase (565 aa).

The protein belongs to the class-II aminoacyl-tRNA synthetase family. ProS type 1 subfamily. Homodimer.

The protein resides in the cytoplasm. The catalysed reaction is tRNA(Pro) + L-proline + ATP = L-prolyl-tRNA(Pro) + AMP + diphosphate. Catalyzes the attachment of proline to tRNA(Pro) in a two-step reaction: proline is first activated by ATP to form Pro-AMP and then transferred to the acceptor end of tRNA(Pro). As ProRS can inadvertently accommodate and process non-cognate amino acids such as alanine and cysteine, to avoid such errors it has two additional distinct editing activities against alanine. One activity is designated as 'pretransfer' editing and involves the tRNA(Pro)-independent hydrolysis of activated Ala-AMP. The other activity is designated 'posttransfer' editing and involves deacylation of mischarged Ala-tRNA(Pro). The misacylated Cys-tRNA(Pro) is not edited by ProRS. This Campylobacter lari (strain RM2100 / D67 / ATCC BAA-1060) protein is Proline--tRNA ligase.